We begin with the raw amino-acid sequence, 499 residues long: UPF0159 protein Ta1429 (499 aa).

ThyX domains follow at residues 1–246 (MIDR…ALSQ) and 271–476 (EKVR…IKFV).

It belongs to the UPF0159 family.

In Thermoplasma acidophilum (strain ATCC 25905 / DSM 1728 / JCM 9062 / NBRC 15155 / AMRC-C165), this protein is UPF0159 protein Ta1429.